The chain runs to 492 residues: N-succinylglutamate 5-semialdehyde dehydrogenase (492 aa).

An NAD(+)-binding site is contributed by 220–225 (GSANTG). Catalysis depends on residues E243 and C277.

The protein belongs to the aldehyde dehydrogenase family. AstD subfamily.

It catalyses the reaction N-succinyl-L-glutamate 5-semialdehyde + NAD(+) + H2O = N-succinyl-L-glutamate + NADH + 2 H(+). Its pathway is amino-acid degradation; L-arginine degradation via AST pathway; L-glutamate and succinate from L-arginine: step 4/5. Its function is as follows. Catalyzes the NAD-dependent reduction of succinylglutamate semialdehyde into succinylglutamate. In Escherichia coli O17:K52:H18 (strain UMN026 / ExPEC), this protein is N-succinylglutamate 5-semialdehyde dehydrogenase.